The following is a 191-amino-acid chain: HTH-type transcriptional regulator SAR0097 (191 aa).

Residues 12–74 (AEYNQQIILT…AIMDKKVDQM (63 aa)) form the HTH tetR-type domain. Positions 37 to 56 (KMSDIAKISGVGVGTLYRHF) form a DNA-binding region, H-T-H motif.

This Staphylococcus aureus (strain MRSA252) protein is HTH-type transcriptional regulator SAR0097.